Reading from the N-terminus, the 404-residue chain is S-adenosylmethionine synthase (404 aa).

Residue histidine 18 coordinates ATP. A Mg(2+)-binding site is contributed by aspartate 20. Glutamate 46 is a K(+) binding site. Residues glutamate 59 and glutamine 102 each coordinate L-methionine. The flexible loop stretch occupies residues glutamine 102–histidine 112. ATP-binding positions include aspartate 178–lysine 180, lysine 249–phenylalanine 250, aspartate 258, arginine 264–lysine 265, alanine 281, and lysine 285. An L-methionine-binding site is contributed by aspartate 258. Lysine 289 serves as a coordination point for L-methionine.

The protein belongs to the AdoMet synthase family. Homotetramer; dimer of dimers. Mg(2+) is required as a cofactor. The cofactor is K(+).

The protein localises to the cytoplasm. The enzyme catalyses L-methionine + ATP + H2O = S-adenosyl-L-methionine + phosphate + diphosphate. Its pathway is amino-acid biosynthesis; S-adenosyl-L-methionine biosynthesis; S-adenosyl-L-methionine from L-methionine: step 1/1. Its function is as follows. Catalyzes the formation of S-adenosylmethionine (AdoMet) from methionine and ATP. The overall synthetic reaction is composed of two sequential steps, AdoMet formation and the subsequent tripolyphosphate hydrolysis which occurs prior to release of AdoMet from the enzyme. In Rhodococcus opacus (strain B4), this protein is S-adenosylmethionine synthase.